We begin with the raw amino-acid sequence, 203 residues long: Small ribosomal subunit protein uS4 (203 aa).

In terms of domain architecture, S4 RNA-binding spans 93 to 154; that stretch reads RRLDNVVFRA…KSRNMDAVTD (62 aa).

It belongs to the universal ribosomal protein uS4 family. In terms of assembly, part of the 30S ribosomal subunit. Contacts protein S5. The interaction surface between S4 and S5 is involved in control of translational fidelity.

In terms of biological role, one of the primary rRNA binding proteins, it binds directly to 16S rRNA where it nucleates assembly of the body of the 30S subunit. With S5 and S12 plays an important role in translational accuracy. In Chlorobium luteolum (strain DSM 273 / BCRC 81028 / 2530) (Pelodictyon luteolum), this protein is Small ribosomal subunit protein uS4.